The primary structure comprises 207 residues: Cytochrome c oxidase subunit 3 (207 aa).

Transmembrane regions (helical) follow at residues 28–48, 70–90, 102–122, 144–164, and 186–206; these read FLGFWLFLGGETVLFASLFAT, VVFMATMLLLTSSLTSVYAIY, LWFGITVLLGAGFLGLEIYEF, LVGTHGSHVAFGLLWILTLMI, and WHFIDVVWVFIFTVVYLMGMV.

Belongs to the cytochrome c oxidase subunit 3 family.

The protein resides in the cell membrane. The enzyme catalyses 4 Fe(II)-[cytochrome c] + O2 + 8 H(+)(in) = 4 Fe(III)-[cytochrome c] + 2 H2O + 4 H(+)(out). The protein is Cytochrome c oxidase subunit 3 (ctaE) of Bacillus sp. (strain PS3).